The chain runs to 147 residues: Methylated-DNA--protein-cysteine methyltransferase (147 aa).

Cys112 functions as the Nucleophile; methyl group acceptor in the catalytic mechanism.

The protein belongs to the MGMT family.

Its subcellular location is the cytoplasm. It catalyses the reaction a 6-O-methyl-2'-deoxyguanosine in DNA + L-cysteinyl-[protein] = S-methyl-L-cysteinyl-[protein] + a 2'-deoxyguanosine in DNA. It carries out the reaction a 4-O-methyl-thymidine in DNA + L-cysteinyl-[protein] = a thymidine in DNA + S-methyl-L-cysteinyl-[protein]. Functionally, involved in the cellular defense against the biological effects of O6-methylguanine (O6-MeG) and O4-methylthymine (O4-MeT) in DNA. Repairs the methylated nucleobase in DNA by stoichiometrically transferring the methyl group to a cysteine residue in the enzyme. This is a suicide reaction: the enzyme is irreversibly inactivated. This Archaeoglobus fulgidus (strain ATCC 49558 / DSM 4304 / JCM 9628 / NBRC 100126 / VC-16) protein is Methylated-DNA--protein-cysteine methyltransferase.